Consider the following 2066-residue polypeptide: Kinesin-like protein KIN-12C (2066 aa).

Disordered stretches follow at residues 1-41 (MSRN…SQIQ) and 59-116 (RAQH…RVSL). The segment covering 20 to 33 (SLSLFSPSRPPLNS) has biased composition (low complexity). Basic and acidic residues predominate over residues 67 to 76 (GPEKKFEVLE). Residues 99 to 109 (EPNSAQSTPTR) are compositionally biased toward polar residues. Positions 168 to 505 (NVQVLIRLRP…LKFAQRAKLI (338 aa)) constitute a Kinesin motor domain. Residue 249–256 (GQTGSGKT) coordinates ATP. Microtubules-binding regions lie at residues 375-379 (SSRSH), 406-412 (VDLAGSE), and 454-458 (HVPYR). Coiled coils occupy residues 1521-1618 (DLKT…VDEI) and 1650-1772 (KIYA…EILL). Disordered regions lie at residues 1803-1823 (SAAE…RGSS) and 2043-2066 (KYRK…TRYR). A coiled-coil region spans residues 1905–2051 (VQRVVEKAQQ…AKYRKTSNNH (147 aa)). Residues 2047-2066 (TSNNHPSTRTQGQSSGTRYR) are compositionally biased toward polar residues.

The protein belongs to the TRAFAC class myosin-kinesin ATPase superfamily. Kinesin family. KIN-12 subfamily. In terms of assembly, interacts with TAN. Interacts with RANGAP1. In terms of tissue distribution, expressed in tissues enriched in dividing cells, such as root meristems, root primordia, and leaf primordia/young leaves.

The protein localises to the cytoplasm. The protein resides in the cytoskeleton. It is found in the phragmoplast. Involved in the spatial control of cytokinesis by a proper phragmoplast guidance. Localizes TAN to the cortical division sites (CDS) during cytokinesis via direct binding. The polypeptide is Kinesin-like protein KIN-12C (Arabidopsis thaliana (Mouse-ear cress)).